The following is a 354-amino-acid chain: Ferrochelatase (354 aa).

Fe cation contacts are provided by His-214 and Glu-295.

Belongs to the ferrochelatase family.

The protein localises to the cytoplasm. The catalysed reaction is heme b + 2 H(+) = protoporphyrin IX + Fe(2+). It participates in porphyrin-containing compound metabolism; protoheme biosynthesis; protoheme from protoporphyrin-IX: step 1/1. Its function is as follows. Catalyzes the ferrous insertion into protoporphyrin IX. This chain is Ferrochelatase, found in Burkholderia orbicola (strain MC0-3).